A 273-amino-acid chain; its full sequence is Small ribosomal subunit protein uS3 (273 aa).

Positions 43 to 111 (IRQLMSTGME…QVQLNILEVK (69 aa)) constitute a KH type-2 domain. Residues 218-227 (QQAAAAPSRG) show a composition bias toward low complexity. A disordered region spans residues 218–273 (QQAAAAPSRGRAGDRPGRPGGDRRRRNDRPAAEAAPAAVEAPAAEAAAPAAEGGQA). Basic and acidic residues predominate over residues 228 to 239 (RAGDRPGRPGGD). Over residues 249-273 (AEAAPAAVEAPAAEAAAPAAEGGQA) the composition is skewed to low complexity.

The protein belongs to the universal ribosomal protein uS3 family. In terms of assembly, part of the 30S ribosomal subunit. Forms a tight complex with proteins S10 and S14.

Its function is as follows. Binds the lower part of the 30S subunit head. Binds mRNA in the 70S ribosome, positioning it for translation. In Paenarthrobacter aurescens (strain TC1), this protein is Small ribosomal subunit protein uS3.